The following is a 255-amino-acid chain: Thiazole synthase (255 aa).

Catalysis depends on lysine 96, which acts as the Schiff-base intermediate with DXP. Residues glycine 157, 184–185, and 206–207 each bind 1-deoxy-D-xylulose 5-phosphate; these read AG and NT.

Belongs to the ThiG family. Homotetramer. Forms heterodimers with either ThiH or ThiS.

The protein resides in the cytoplasm. It carries out the reaction [ThiS sulfur-carrier protein]-C-terminal-Gly-aminoethanethioate + 2-iminoacetate + 1-deoxy-D-xylulose 5-phosphate = [ThiS sulfur-carrier protein]-C-terminal Gly-Gly + 2-[(2R,5Z)-2-carboxy-4-methylthiazol-5(2H)-ylidene]ethyl phosphate + 2 H2O + H(+). It participates in cofactor biosynthesis; thiamine diphosphate biosynthesis. Functionally, catalyzes the rearrangement of 1-deoxy-D-xylulose 5-phosphate (DXP) to produce the thiazole phosphate moiety of thiamine. Sulfur is provided by the thiocarboxylate moiety of the carrier protein ThiS. In vitro, sulfur can be provided by H(2)S. In Clostridium acetobutylicum (strain ATCC 824 / DSM 792 / JCM 1419 / IAM 19013 / LMG 5710 / NBRC 13948 / NRRL B-527 / VKM B-1787 / 2291 / W), this protein is Thiazole synthase.